Consider the following 460-residue polypeptide: Zinc transporter 6 (460 aa).

Over 1–33 (MGTIHLFRKPQRSFFGKLLQEFRLVAADRRSWK) the chain is Cytoplasmic. Residues 34 to 54 (ILLFGAINVLCTGFLLMWCSS) form a helical membrane-spanning segment. The Extracellular segment spans residues 55–64 (TNSIALTAYT). Residues 65–85 (YLTIFDLFSLITCLISYWVMM) form a helical membrane-spanning segment. Residues 86 to 98 (RKPSPVYSFGFER) lie on the Cytoplasmic side of the membrane. The helical transmembrane segment at 99 to 119 (LEVLAVFASTVLAQLGALFIL) threads the bilayer. At 120–134 (KESAERFLEQPEIHT) the chain is on the extracellular side. The helical transmembrane segment at 135–155 (GRLLVGTFVALSFNLFTMLSI) threads the bilayer. The Cytoplasmic portion of the chain corresponds to 156-200 (RNKPFAYVSEAASTSWLQEHVADLSRSLCGLIPGLSSIFLPRMNP). The chain crosses the membrane as a helical span at residues 201–221 (FVLIDLAGAFALCITYMLIEI). Over 222–223 (NN) the chain is Extracellular. The chain crosses the membrane as a helical span at residues 224-244 (YFAVDTASAIAIALMTFGTMY). Over 245–460 (PMSVYSGKVL…GINRMGQPRP (216 aa)) the chain is Cytoplasmic. Positions 371–390 (TPVTSTPAKPSSPPPEFSFN) are disordered.

It belongs to the cation diffusion facilitator (CDF) transporter (TC 2.A.4) family. SLC30A subfamily. Heterodimer with SLC30A5; form a functional zinc ion transmembrane transporter. Expressed in brain and liver, and to a lower extent also in lung. Highly expressed in brain (at protein level).

It is found in the golgi apparatus. The protein resides in the trans-Golgi network membrane. Functionally, has probably no intrinsic transporter activity but together with SLC30A5 forms a functional zinc ion:proton antiporter heterodimer, mediating zinc entry into the lumen of organelles along the secretory pathway. As part of that zinc ion:proton antiporter, contributes to zinc ion homeostasis within the early secretory pathway and regulates the activation and folding of enzymes like alkaline phosphatases and enzymes involved in phosphatidylinositol glycan anchor biosynthesis. This chain is Zinc transporter 6 (Slc30a6), found in Mus musculus (Mouse).